Here is a 507-residue protein sequence, read N- to C-terminus: ATP synthase subunit alpha, chloroplastic (507 aa).

170–177 (GDRQTGKT) provides a ligand contact to ATP.

The protein belongs to the ATPase alpha/beta chains family. As to quaternary structure, F-type ATPases have 2 components, CF(1) - the catalytic core - and CF(0) - the membrane proton channel. CF(1) has five subunits: alpha(3), beta(3), gamma(1), delta(1), epsilon(1). CF(0) has four main subunits: a, b, b' and c.

It is found in the plastid. The protein localises to the chloroplast thylakoid membrane. It carries out the reaction ATP + H2O + 4 H(+)(in) = ADP + phosphate + 5 H(+)(out). Its function is as follows. Produces ATP from ADP in the presence of a proton gradient across the membrane. The alpha chain is a regulatory subunit. The sequence is that of ATP synthase subunit alpha, chloroplastic from Populus alba (White poplar).